A 700-amino-acid polypeptide reads, in one-letter code: ABC transporter B family member 26, chloroplastic (700 aa).

The transit peptide at 1–59 (MAQQVLGCTSRPIRVSLHRCSVITTSDTIRRKNLRFVRNPRLSFSLQSSTRNYRLPSIN) directs the protein to the chloroplast. The next 3 membrane-spanning stretches (helical) occupy residues 137–157 (WVIFAAFSTLIVAALSEITIP), 182–202 (LVTLCVTSGICSGIRGCFFGI), and 268–288 (LIYLLILSWPLGLCTLVICCI). The region spanning 139 to 421 (IFAAFSTLIV…VGDNLSSLMQ (283 aa)) is the ABC transmembrane type-1 domain. Residues 455 to 694 (IEFVDVSFSY…DGLYARLTKR (240 aa)) enclose the ABC transporter domain. 490–497 (GLSGSGKS) provides a ligand contact to ATP.

This sequence belongs to the ABC transporter superfamily. ABCB family. Multidrug resistance exporter (TC 3.A.1.201) subfamily.

The protein resides in the plastid. Its subcellular location is the chloroplast membrane. The protein is ABC transporter B family member 26, chloroplastic (ABCB26) of Arabidopsis thaliana (Mouse-ear cress).